A 119-amino-acid chain; its full sequence is Protein TraH (119 aa).

Residues 1–67 (MSNPNEMTDE…ALDESRRPKA (67 aa)) form a disordered region. Residues 41–54 (APSAPAEPSHSASP) are compositionally biased toward low complexity.

In terms of biological role, the initiation process of transfer DNA synthesis requires the interaction of at least three plasmid-specific components (TraH, TraI, and TraJ) at the transfer origin resulting in the assembly of a specialized nucleoprotein complex - the relaxosome. The protein is Protein TraH (traH) of Escherichia coli.